The following is a 185-amino-acid chain: Ribosome-recycling factor (185 aa).

The protein belongs to the RRF family.

The protein resides in the cytoplasm. Its function is as follows. Responsible for the release of ribosomes from messenger RNA at the termination of protein biosynthesis. May increase the efficiency of translation by recycling ribosomes from one round of translation to another. This is Ribosome-recycling factor from Streptomyces avermitilis (strain ATCC 31267 / DSM 46492 / JCM 5070 / NBRC 14893 / NCIMB 12804 / NRRL 8165 / MA-4680).